The primary structure comprises 615 residues: Aldehyde oxidase GLOX1 (615 aa).

A signal peptide spans 1-25 (MKKSTRLLWLLSIIVLVAAVSKAVA). N-linked (GlcNAc...) asparagine glycosylation occurs at N35. The segment at 70–89 (PPKAGKGKGKGKGRGTVAAG) is disordered. Residues 72–82 (KAGKGKGKGKG) are compositionally biased toward basic residues. N-linked (GlcNAc...) asparagine glycosylation is found at N187 and N297.

The protein resides in the secreted. It catalyses the reaction an aldehyde + O2 + H2O = a carboxylate + H2O2 + H(+). In terms of biological role, catalyzes the oxidation of aldehydes to the corresponding carboxylate by coupling the reaction to the reduction of dioxygen to hydrogen peroxide. Substrates include glyoxal and other aldehydes. May be regulated by the transcription factor MYB80 during anther development and play a role in tapetum and pollen development. The polypeptide is Aldehyde oxidase GLOX1 (Arabidopsis thaliana (Mouse-ear cress)).